Consider the following 178-residue polypeptide: Large ribosomal subunit protein uL6 (178 aa).

This sequence belongs to the universal ribosomal protein uL6 family. In terms of assembly, part of the 50S ribosomal subunit.

Its function is as follows. This protein binds to the 23S rRNA, and is important in its secondary structure. It is located near the subunit interface in the base of the L7/L12 stalk, and near the tRNA binding site of the peptidyltransferase center. The chain is Large ribosomal subunit protein uL6 from Helicobacter hepaticus (strain ATCC 51449 / 3B1).